We begin with the raw amino-acid sequence, 473 residues long: Photosystem II CP43 reaction center protein (473 aa).

The propeptide occupies 1–14; the sequence is MKTLYSLRRYYPVE. At Thr-15 the chain carries N-acetylthreonine. Position 15 is a phosphothreonine (Thr-15). The next 5 helical transmembrane spans lie at 69 to 93, 134 to 155, 178 to 200, 255 to 275, and 291 to 312; these read LFEV…PHLA, LIGP…KDKN, KASF…REIT, KPFA…LSYS, and WFNN…ASQA. Glu-367 contacts [CaMn4O5] cluster. A helical transmembrane segment spans residues 447–471; that stretch reads RARAAAAGFEKGIDRDSEPVLSMTP.

Belongs to the PsbB/PsbC family. PsbC subfamily. PSII is composed of 1 copy each of membrane proteins PsbA, PsbB, PsbC, PsbD, PsbE, PsbF, PsbH, PsbI, PsbJ, PsbK, PsbL, PsbM, PsbT, PsbX, PsbY, PsbZ, Psb30/Ycf12, at least 3 peripheral proteins of the oxygen-evolving complex and a large number of cofactors. It forms dimeric complexes. The cofactor is Binds multiple chlorophylls and provides some of the ligands for the Ca-4Mn-5O cluster of the oxygen-evolving complex. It may also provide a ligand for a Cl- that is required for oxygen evolution. PSII binds additional chlorophylls, carotenoids and specific lipids..

It is found in the plastid. The protein resides in the chloroplast thylakoid membrane. Functionally, one of the components of the core complex of photosystem II (PSII). It binds chlorophyll and helps catalyze the primary light-induced photochemical processes of PSII. PSII is a light-driven water:plastoquinone oxidoreductase, using light energy to abstract electrons from H(2)O, generating O(2) and a proton gradient subsequently used for ATP formation. This chain is Photosystem II CP43 reaction center protein, found in Anthoceros angustus (Hornwort).